The sequence spans 95 residues: UPF0125 protein BUsg_244 (95 aa).

This sequence belongs to the UPF0125 (RnfH) family.

The protein is UPF0125 protein BUsg_244 of Buchnera aphidicola subsp. Schizaphis graminum (strain Sg).